Reading from the N-terminus, the 49-residue chain is Putative metallothionein MT1DP (49 aa).

The segment at M1–C29 is beta. Positions 5, 7, 13, 15, 19, 21, 26, 29, 33, 34, 36, 37, 41, 44, and 48 each coordinate a divalent metal cation. The segment at K30–T49 is alpha.

Belongs to the metallothionein superfamily. Type 1 family.

Its function is as follows. Metallothioneins have a high content of cysteine residues that bind various heavy metals. The chain is Putative metallothionein MT1DP (MT1DP) from Homo sapiens (Human).